The sequence spans 286 residues: Pyridoxal kinase PdxY (286 aa).

Substrate contacts are provided by residues Ser-9 and 44–45 (TQ). Residues Asp-111, Ala-143, Glu-148, Lys-181, and 208–211 (RPLV) each bind ATP. Position 223 (Asp-223) interacts with substrate.

It belongs to the pyridoxine kinase family. PdxY subfamily. In terms of assembly, homodimer. Mg(2+) serves as cofactor.

The catalysed reaction is pyridoxal + ATP = pyridoxal 5'-phosphate + ADP + H(+). Its pathway is cofactor metabolism; pyridoxal 5'-phosphate salvage; pyridoxal 5'-phosphate from pyridoxal: step 1/1. In terms of biological role, pyridoxal kinase involved in the salvage pathway of pyridoxal 5'-phosphate (PLP). Catalyzes the phosphorylation of pyridoxal to PLP. The chain is Pyridoxal kinase PdxY from Salmonella paratyphi A (strain ATCC 9150 / SARB42).